The primary structure comprises 89 residues: Small ribosomal subunit protein bS20 (89 aa).

The disordered stretch occupies residues 1–28 (MTLANIKSAKKRAVQSEKSRQHNASQRS).

The protein belongs to the bacterial ribosomal protein bS20 family.

In terms of biological role, binds directly to 16S ribosomal RNA. This is Small ribosomal subunit protein bS20 from Mannheimia succiniciproducens (strain KCTC 0769BP / MBEL55E).